Reading from the N-terminus, the 96-residue chain is MGYMDEVNIKVGDYVVYINTGTKGRVVDIRKDENGDIWVVLDNNLMYRPHLLRVIDKSKITERKEDIDEVVKKLEKEELEEGKLIDLDLGDACGAG.

This is an uncharacterized protein from Methanocaldococcus jannaschii (strain ATCC 43067 / DSM 2661 / JAL-1 / JCM 10045 / NBRC 100440) (Methanococcus jannaschii).